The chain runs to 548 residues: C2H2-type transcription factor MSN2 (548 aa).

C2H2-type zinc fingers lie at residues 420-448 (FKCE…QDKP) and 449-471 (FECN…ARTH).

As to quaternary structure, interacts with HOG1/OSM1.

The protein resides in the nucleus. It localises to the cytoplasm. Its function is as follows. Transcription factor that acts as a key downstream transcription factor in the HOG1-MAPK pathway. Regulates the expression of a series of downstream genes and controls vegetative growth, conidiogenesis, cell wall integrity, stress response, mitochondrial morphology, and pathogenicity. Binds to a putative promoter region 1500 bp upstream of the start codons of the target genes MGG_07019, POX1 and DCI1. Binds to the AGGGG and CCCCT motif of the COS1 promoter region. Involved in fatty acid beta-oxidation by directly regulating the expression of the dienoyl-CoA isomerase DCI1, thereby facilitating invasive hyphal growth during the early infection stage. Targets also the 3-methylglutaconyl-CoA hydratase-encoding gene (AUH1) to control mitochondrial morphology and mitophagy, which are critical for the infectious growth of the pathogen. The sequence is that of C2H2-type transcription factor MSN2 from Pyricularia oryzae (strain 70-15 / ATCC MYA-4617 / FGSC 8958) (Rice blast fungus).